The sequence spans 541 residues: Membrane protein insertase YidC (541 aa).

The next 5 helical transmembrane spans lie at 7–27 (LLFM…QVDY), 345–365 (LVQN…AVLY), 415–435 (LGGC…YWTF), 453–473 (LSAQ…MFLL), and 492–512 (FMPL…VLYW).

This sequence belongs to the OXA1/ALB3/YidC family. Type 1 subfamily. Interacts with the Sec translocase complex via SecD. Specifically interacts with transmembrane segments of nascent integral membrane proteins during membrane integration.

The protein resides in the cell inner membrane. In terms of biological role, required for the insertion and/or proper folding and/or complex formation of integral membrane proteins into the membrane. Involved in integration of membrane proteins that insert both dependently and independently of the Sec translocase complex, as well as at least some lipoproteins. Aids folding of multispanning membrane proteins. The protein is Membrane protein insertase YidC of Histophilus somni (strain 2336) (Haemophilus somnus).